A 364-amino-acid polypeptide reads, in one-letter code: Putative F-box/kelch-repeat protein At1g12170 (364 aa).

An F-box domain is found at 1–50 (MMHVILPWELVEEILYRVPPLSLTRFKIVCKQWNTLFKSKSFVNNHLVRV). Kelch repeat units follow at residues 156-205 (SIYN…LNGN) and 328-364 (CVYI…IPVP).

This is Putative F-box/kelch-repeat protein At1g12170 from Arabidopsis thaliana (Mouse-ear cress).